The chain runs to 901 residues: HTH-type transcriptional regulator MalT (901 aa).

ATP is bound at residue S39–T46. Positions E829–L894 constitute an HTH luxR-type domain. The H-T-H motif DNA-binding region spans N853 to R872.

The protein belongs to the MalT family. Monomer in solution. Oligomerizes to an active state in the presence of the positive effectors ATP and maltotriose.

Activated by ATP and maltotriose, which are both required for DNA binding. Functionally, positively regulates the transcription of the maltose regulon whose gene products are responsible for uptake and catabolism of malto-oligosaccharides. Specifically binds to the promoter region of its target genes, recognizing a short DNA motif called the MalT box. This chain is HTH-type transcriptional regulator MalT, found in Salmonella heidelberg (strain SL476).